The following is a 335-amino-acid chain: MRTIKEIALESGYSPATVSRLLNNDPNLSITADTKNKILEIANKLGYWEDHQEKKIKPTIALLYRVNHNEQLQDEYFTSLKQALVSTVERDALKMKTFYDIEDLIKNASLFQGFIGVGAEPIENAQLVKLHKVLPNGVFVDTNPAPELFDSIRPNLPFTVKNAIDLFIKNGINKIGFIGGVGPKHDHIQENDLRSITFVEYMKTRGMDTKWTCVEGPVSVENGYKLGKMVLAKYKNDLPEAFLIASDTLAVGVLQAFNEENVNVPKDTKILSINNSNVVKYVSPPLSSFNINQQEMIDMALDTLTHLIIRPDRPNIDIRMNTNLVVRKSFVPQEK.

An HTH lacI-type domain is found at 1–58; sequence MRTIKEIALESGYSPATVSRLLNNDPNLSITADTKNKILEIANKLGYWEDHQEKKIKP. The segment at residues 4–23 is a DNA-binding region (H-T-H motif); it reads IKEIALESGYSPATVSRLLN.

Its pathway is carbohydrate metabolism; lactose degradation [regulation]. Functionally, negatively regulates the transcription of the lactose utilization genes lacL and lacM. This Lactobacillus helveticus (Lactobacillus suntoryeus) protein is HTH-type transcriptional regulator LacR (lacR).